Reading from the N-terminus, the 919-residue chain is Rho guanine nucleotide exchange factor 1 (919 aa).

One can recognise an RGSL domain in the interval 39–230; that stretch reads DQNSQFQSLE…SLYMRHLGVR (192 aa). Residues 247 to 402 are disordered; sequence VMGNRRSDEP…PPGWRELVPS (156 aa). The segment covering 281–310 has biased composition (basic and acidic residues); it reads DCRHLKVEVDEKPGPADRKGSLGISSRDRT. A compositionally biased stretch (acidic residues) spans 363–379; sequence STEDNGETESPEPGDDG. Position 372 is a phosphoserine (serine 372). One can recognise a DH domain in the interval 414–603; that stretch reads KRQEVISELL…REILHHVNQA (190 aa). The region spanning 645-758 is the PH domain; the sequence is KLVHEGPLTW…WCALITETAG (114 aa). Residue threonine 693 is modified to Phosphothreonine. A Phosphotyrosine; by JAK2 modification is found at tyrosine 736. 2 disordered regions span residues 761–800 and 839–865; these read KVPA…PADA and TEED…PTHT. Low complexity predominate over residues 775 to 787; sequence PSSTREPLLSSSE. The stretch at 864 to 893 forms a coiled coil; that stretch reads HTQEVEENLLSLEVVIKQLEELEEEFCRLR. Serine 904 carries the post-translational modification Phosphoserine.

As to quaternary structure, interacts with RHOA, GNA12 and GNA13. Homooligomerizes through the coiled coil region. Interacts with CTNNAL1. May interact with CCPG1. Phosphorylated by PKCA. Angiotensin-2 induced Tyr-736 phosphorylation is mediated by JAK2.

Its subcellular location is the cytoplasm. It is found in the membrane. In terms of biological role, seems to play a role in the regulation of RhoA GTPase by guanine nucleotide-binding alpha-12 (GNA12) and alpha-13 (GNA13) subunits. Acts as a GTPase-activating protein (GAP) for GNA12 and GNA13, and as guanine nucleotide exchange factor (GEF) for RhoA GTPase. Activated G alpha 13/GNA13 stimulates the RhoGEF activity through interaction with the RGS-like domain. This GEF activity is inhibited by binding to activated GNA12. Mediates angiotensin-2-induced RhoA activation. In lymphoid follicles, may trigger activation of GNA13 as part of S1PR2-dependent signaling pathway that leads to inhibition of germinal center (GC) B cell growth and migration outside the GC niche. The polypeptide is Rho guanine nucleotide exchange factor 1 (Arhgef1) (Rattus norvegicus (Rat)).